The chain runs to 206 residues: Dephospho-CoA kinase (206 aa).

A DPCK domain is found at 6-206 (IIGLTGGIAS…KWKWKDWSKK (201 aa)). 14–19 (ASGKST) lines the ATP pocket.

Belongs to the CoaE family.

It localises to the cytoplasm. It catalyses the reaction 3'-dephospho-CoA + ATP = ADP + CoA + H(+). The protein operates within cofactor biosynthesis; coenzyme A biosynthesis; CoA from (R)-pantothenate: step 5/5. Functionally, catalyzes the phosphorylation of the 3'-hydroxyl group of dephosphocoenzyme A to form coenzyme A. This Carboxydothermus hydrogenoformans (strain ATCC BAA-161 / DSM 6008 / Z-2901) protein is Dephospho-CoA kinase.